Consider the following 327-residue polypeptide: Aldo-keto reductase family 7 member A3 (327 aa).

Phosphoserine is present on S2. NADP(+) is bound by residues M13, R18, and D40. Catalysis depends on Y45, which acts as the Proton donor. Citrate is bound at residue H109. Positions 140, 194, 196, 198, 204, and 218 each coordinate NADP(+). The citrate site is built by Y228 and R231. NADP(+) is bound by residues S286, Q290, Q293, N294, and R327.

It belongs to the aldo/keto reductase family. Aldo/keto reductase 2 subfamily. In terms of assembly, homodimer. Heterodimer with AKR7A2.

Its subcellular location is the cytoplasm. It catalyses the reaction a primary alcohol + NADP(+) = an aldehyde + NADPH + H(+). The catalysed reaction is aflatoxin B1 dialdehyde + NADPH + H(+) = aflatoxin B1 C(6a)-monoaldehyde + NADP(+). The enzyme catalyses aflatoxin B1 dialdehyde + NADPH + H(+) = aflatoxin B1 C(8)-monoaldehyde + NADP(+). It carries out the reaction aflatoxin B1 C(6a)-monoaldehyde + NADPH + 2 H(+) = aflatoxin B1 triol + NADP(+). Its activity is regulated as follows. Inhibited by citrate. Catalyzes the NADPH-dependent reduction of various carbonyl-containing compounds, including aldehydes, ketones, and toxic products from cellular metabolism or environmental exposure. Can reduce the dialdehyde form of aflatoxin B1 (AFB1) into alcohol derivatives, via monoaldehydes intermediates, thus preventing the formation of protein adducts that contribute to AFB1-induced toxicity. The polypeptide is Aldo-keto reductase family 7 member A3 (Rattus norvegicus (Rat)).